We begin with the raw amino-acid sequence, 1055 residues long: RapA guanosine triphosphatase-activating protein 1 (1055 aa).

Disordered regions lie at residues 76-100 (LSPQ…EEER), 256-292 (NHQP…SSLT), 418-525 (QQLL…FLGV), 544-570 (THAT…SPPL), 603-629 (TTQL…PPSE), and 943-969 (NNNS…NLPT). Residues 89–100 (QHEKITPEEEER) are compositionally biased toward basic and acidic residues. Composition is skewed to low complexity over residues 262–292 (STPR…SSLT), 442–455 (DFNL…NNNN), and 469–482 (TTTT…NNNN). Residues 483–494 (ISPQHSGTSGSP) are compositionally biased toward polar residues. 2 stretches are compositionally biased toward low complexity: residues 603 to 622 (TTQL…TSQP) and 943 to 966 (NNNS…SDSN). The region spanning 779–1048 (LIQFEAKNIH…RTRKEFLHSF (270 aa)) is the Rap-GAP domain.

The protein localises to the cytoplasm. Its subcellular location is the cell cortex. Functionally, mediates the deactivation of rap1 and plays an important role in spatially and temporally regulating cell adhesion and chemotaxis by controlling attachment disassembly in the leading edge through the regulation of myosin II assembly and disassembly. Overexpression leads to defective chemotaxis. The protein is RapA guanosine triphosphatase-activating protein 1 (rapgap1) of Dictyostelium discoideum (Social amoeba).